Reading from the N-terminus, the 445-residue chain is Cyclic GMP-AMP synthase-like receptor 1 (445 aa).

Positions 70, 72, and 186 each coordinate Mg(2+). 70 to 72 contacts ATP; the sequence is EYD. Residues Asp186 and 232–239 each bind GTP; that span reads RTSFYEAE. ATP-binding positions include 236–239, Lys257, and 270–274; these read YEAE and SYHIK. A disordered region spans residues 357-445; it reads LNDDNENSVH…KSKTTTPKPS (89 aa). The span at 377 to 398 shows a compositional bias: basic and acidic residues; that stretch reads QKMEKTSTESEQKKPTETKPNA. Over residues 435–445 the composition is skewed to low complexity; the sequence is TKSKTTTPKPS.

It belongs to the mab-21 family. It depends on Mg(2+) as a cofactor. The cofactor is Mn(2+).

It carries out the reaction GTP + ATP = 3',2'-cGAMP + 2 diphosphate. It catalyses the reaction GTP + ATP = pppA(2'-5')pG + diphosphate. The catalysed reaction is pppA(2'-5')pG = 3',2'-cGAMP + diphosphate. With respect to regulation, the enzyme activity is specifically activated by double-stranded RNA (dsRNA). Functionally, nucleotidyltransferase that catalyzes the formation of cyclic GMP-AMP (3',2'-cGAMP) from ATP and GTP and plays a key role in innate immunity. Synthesizes 3',2'-cGAMP in a two-step reaction through production of the linear intermediate pppA(2'-5')pG. Acts as a key sensor of double-stranded RNA (dsRNA), the presence of dsRNA in the cytoplasm being a danger signal that triggers the immune responses. Directly binds dsRNA, activating the nucleotidyltransferase activity, leading to synthesis of 3',2'-cGAMP, a second messenger that binds to and activates Sting, thereby triggering the antiviral immune response via activation of the NF-kappa-B transcription factor Rel (Relish). This Drosophila erecta (Fruit fly) protein is Cyclic GMP-AMP synthase-like receptor 1.